The primary structure comprises 260 residues: UPF0328 protein ECU07_1870/ECU10_0030 (260 aa).

This sequence belongs to the UPF0328 family.

The chain is UPF0328 protein ECU07_1870/ECU10_0030 from Encephalitozoon cuniculi (strain GB-M1) (Microsporidian parasite).